A 36-amino-acid chain; its full sequence is Conotoxin Bu21 (36 aa).

The propeptide occupies 1–21; the sequence is DGANAEATDNKPGVFERDEKK. 2 cysteine pairs are disulfide-bonded: Cys22-Cys28 and Cys23-Cys34.

Belongs to the conotoxin A superfamily. As to expression, expressed by the venom duct.

It is found in the secreted. In Conus bullatus (Bubble cone), this protein is Conotoxin Bu21.